We begin with the raw amino-acid sequence, 937 residues long: Aconitate hydratase A (937 aa).

A disordered region spans residues 410-450 (MANEGGFQPGSTSDLDNYNASWPGEGESAAANAEGRPSNPV). Polar residues predominate over residues 418–429 (PGSTSDLDNYNA). Residues 433–444 (GEGESAAANAEG) are compositionally biased toward low complexity. Positions 475, 541, and 544 each coordinate [4Fe-4S] cluster.

Belongs to the aconitase/IPM isomerase family. In terms of assembly, monomer. The cofactor is [4Fe-4S] cluster.

The catalysed reaction is citrate = D-threo-isocitrate. The enzyme catalyses (2S,3R)-3-hydroxybutane-1,2,3-tricarboxylate = 2-methyl-cis-aconitate + H2O. It participates in carbohydrate metabolism; tricarboxylic acid cycle; isocitrate from oxaloacetate: step 2/2. The protein operates within organic acid metabolism; propanoate degradation. In terms of biological role, involved in the catabolism of short chain fatty acids (SCFA) via the tricarboxylic acid (TCA)(acetyl degradation route) and probably via the 2-methylcitrate cycle I (propionate degradation route). Catalyzes the reversible isomerization of citrate to isocitrate via cis-aconitate. Could catalyze the hydration of 2-methyl-cis-aconitate to yield (2R,3S)-2-methylisocitrate. The apo form of AcnA functions as a RNA-binding regulatory protein. The polypeptide is Aconitate hydratase A (acn) (Corynebacterium efficiens (strain DSM 44549 / YS-314 / AJ 12310 / JCM 11189 / NBRC 100395)).